The following is a 492-amino-acid chain: Glycylpeptide N-tetradecanoyltransferase (492 aa).

A compositionally biased stretch (basic and acidic residues) spans 1 to 22 (MSDSKDRKGKAPEGQSSEKKDG). The disordered stretch occupies residues 1–45 (MSDSKDRKGKAPEGQSSEKKDGAVNITPQMAESLLENNPALRNET). Residues 82–85 (YKFW), 215–217 (LCI), and 223–227 (SKRLT) each bind tetradecanoyl-CoA. Leu492 functions as the Proton acceptor; via carboxylate in the catalytic mechanism.

The protein belongs to the NMT family. Monomer.

It is found in the cytoplasm. It carries out the reaction N-terminal glycyl-[protein] + tetradecanoyl-CoA = N-tetradecanoylglycyl-[protein] + CoA + H(+). In terms of biological role, adds a myristoyl group to the N-terminal glycine residue of certain cellular proteins. This chain is Glycylpeptide N-tetradecanoyltransferase (nmt1), found in Aspergillus fumigatus (strain ATCC MYA-4609 / CBS 101355 / FGSC A1100 / Af293) (Neosartorya fumigata).